We begin with the raw amino-acid sequence, 334 residues long: Heat-inducible transcription repressor HrcA (334 aa).

This sequence belongs to the HrcA family.

Functionally, negative regulator of class I heat shock genes (grpE-dnaK-dnaJ and groELS operons). Prevents heat-shock induction of these operons. The polypeptide is Heat-inducible transcription repressor HrcA (Acidovorax ebreus (strain TPSY) (Diaphorobacter sp. (strain TPSY))).